A 389-amino-acid polypeptide reads, in one-letter code: 5-hydroxytryptamine receptor 1B (389 aa).

Residues 1-27 form a disordered region; sequence MEDAGTPCAPPPPAGSQTGAPPANLSS. Topologically, residues 1–45 are extracellular; that stretch reads MEDAGTPCAPPPPAGSQTGAPPANLSSAPHNCSAEGYIYQDSIAL. Positions 15 to 27 are enriched in polar residues; it reads GSQTGAPPANLSS. Residues asparagine 24 and asparagine 31 are each glycosylated (N-linked (GlcNAc...) asparagine). A helical transmembrane segment spans residues 46–71; that stretch reads PWKVLLAILLALLTLATTLSNAFVIA. Residues 72–85 are Cytoplasmic-facing; the sequence is TVYRTRKLHTPANY. A helical membrane pass occupies residues 86 to 110; the sequence is LIASLAVTDLLVSILVMPISTMYAV. Residues 111–118 are Extracellular-facing; that stretch reads TGRWTLGQ. The helical transmembrane segment at 119 to 144 threads the bilayer; sequence VVCDLWLSSDITCCTASILHLCVIAL. Cysteine 121 and cysteine 198 form a disulfide bridge. 2 residues coordinate ergotamine: aspartate 128 and threonine 133. Positions 145–147 match the DRY motif; important for ligand-induced conformation changes and signaling motif; the sequence is DRY. Residues 145-164 are Cytoplasmic-facing; that stretch reads DRYWAITDAVEYSAKRTPKR. A helical transmembrane segment spans residues 165–183; the sequence is AAVMIALVWVFSISISLPP. Residues 184-204 are Extracellular-facing; it reads FFWRQAKAEEEVSDCVVNTDH. Residue valine 200 coordinates ergotamine. Residues 205 to 228 traverse the membrane as a helical segment; it reads ILYTVYSTVGAFYFPTLLLIALYG. Residues 229-314 lie on the Cytoplasmic side of the membrane; sequence RIYVEARSRI…AARERKATKT (86 aa). Residues 258-271 are compositionally biased toward polar residues; it reads DSPGSTSSVTSVNS. The disordered stretch occupies residues 258–281; sequence DSPGSTSSVTSVNSRAPDVPSESG. The chain crosses the membrane as a helical span at residues 315–336; it reads LGIILGAFIVCWLPFFIISLVM. Over 337 to 346 the chain is Extracellular; that stretch reads PICKDACWFH. Residues 347–369 traverse the membrane as a helical segment; the sequence is LAIFDFFTWLGYLNSLINPIIYT. The NPxxY motif; important for ligand-induced conformation changes and signaling signature appears at 364 to 368; it reads NPIIY. Residues 370 to 389 lie on the Cytoplasmic side of the membrane; that stretch reads MSNEDFKQAFHKLIRFKCAS. Cysteine 387 carries S-palmitoyl cysteine lipidation.

It belongs to the G-protein coupled receptor 1 family. In terms of assembly, homodimer. Heterodimer with HTR1D. In terms of processing, phosphorylated. Desensitization of the receptor may be mediated by its phosphorylation. Palmitoylated.

The protein resides in the cell membrane. Functionally, G-protein coupled receptor for 5-hydroxytryptamine (serotonin). Also functions as a receptor for ergot alkaloid derivatives, various anxiolytic and antidepressant drugs and other psychoactive substances, such as lysergic acid diethylamide (LSD). Ligand binding causes a conformation change that triggers signaling via guanine nucleotide-binding proteins (G proteins) and modulates the activity of downstream effectors, such as adenylate cyclase. HTR1B is coupled to G(i)/G(o) G alpha proteins and mediates inhibitory neurotransmission by inhibiting adenylate cyclase activity. Arrestin family members inhibit signaling via G proteins and mediate activation of alternative signaling pathways. Regulates the release of 5-hydroxytryptamine, dopamine and acetylcholine in the brain, and thereby affects neural activity, nociceptive processing, pain perception, mood and behavior. Besides, plays a role in vasoconstriction of cerebral arteries. This chain is 5-hydroxytryptamine receptor 1B (HTR1B), found in Vulpes vulpes (Red fox).